Consider the following 167-residue polypeptide: Large ribosomal subunit protein uL15 (167 aa).

Positions 1–10 (MKLNQISDNP) are enriched in polar residues. The segment at 1–37 (MKLNQISDNPGATKDRMRVGRGIGSGKGKTAGRGVKG) is disordered. The segment covering 21–35 (RGIGSGKGKTAGRGV) has biased composition (gly residues).

The protein belongs to the universal ribosomal protein uL15 family. As to quaternary structure, part of the 50S ribosomal subunit.

In terms of biological role, binds to the 23S rRNA. This Methylobacterium radiotolerans (strain ATCC 27329 / DSM 1819 / JCM 2831 / NBRC 15690 / NCIMB 10815 / 0-1) protein is Large ribosomal subunit protein uL15.